We begin with the raw amino-acid sequence, 276 residues long: Sulfur carrier protein FdhD (276 aa).

Cys-122 serves as the catalytic Cysteine persulfide intermediate. Position 259–264 (259–264 (FCRRGR)) interacts with Mo-bis(molybdopterin guanine dinucleotide).

This sequence belongs to the FdhD family.

It is found in the cytoplasm. Its function is as follows. Required for formate dehydrogenase (FDH) activity. Acts as a sulfur carrier protein that transfers sulfur from IscS to the molybdenum cofactor prior to its insertion into FDH. This Proteus mirabilis (strain HI4320) protein is Sulfur carrier protein FdhD.